The sequence spans 112 residues: Small ribosomal subunit protein bS6 (112 aa).

This sequence belongs to the bacterial ribosomal protein bS6 family.

Its function is as follows. Binds together with bS18 to 16S ribosomal RNA. The chain is Small ribosomal subunit protein bS6 from Legionella pneumophila (strain Paris).